A 357-amino-acid chain; its full sequence is Isopentenyl-diphosphate delta-isomerase (357 aa).

12–13 is a binding site for substrate; it reads RK. FMN is bound by residues Ser70, 71-73, Ser101, and Asn130; that span reads SMT. 101 to 103 provides a ligand contact to substrate; sequence SMR. Gln165 contributes to the substrate binding site. A Mg(2+)-binding site is contributed by Glu166. FMN is bound by residues Lys197, 289–291, and 310–311; these read GIR and AQ.

Belongs to the IPP isomerase type 2 family. As to quaternary structure, homooctamer. Dimer of tetramers. FMN is required as a cofactor. It depends on NADPH as a cofactor. The cofactor is Mg(2+).

Its subcellular location is the cytoplasm. It catalyses the reaction isopentenyl diphosphate = dimethylallyl diphosphate. Its function is as follows. Involved in the biosynthesis of isoprenoids. Catalyzes the 1,3-allylic rearrangement of the homoallylic substrate isopentenyl (IPP) to its allylic isomer, dimethylallyl diphosphate (DMAPP). In Chlorobaculum parvum (strain DSM 263 / NCIMB 8327) (Chlorobium vibrioforme subsp. thiosulfatophilum), this protein is Isopentenyl-diphosphate delta-isomerase.